A 320-amino-acid polypeptide reads, in one-letter code: tRNA dimethylallyltransferase (320 aa).

16–23 (GPTASGKT) is a binding site for ATP. 18–23 (TASGKT) contributes to the substrate binding site. Interaction with substrate tRNA regions lie at residues 41-44 (DSAL), 165-169 (QRIQR), and 247-252 (RCVGYR).

It belongs to the IPP transferase family. As to quaternary structure, monomer. Mg(2+) serves as cofactor.

It catalyses the reaction adenosine(37) in tRNA + dimethylallyl diphosphate = N(6)-dimethylallyladenosine(37) in tRNA + diphosphate. Functionally, catalyzes the transfer of a dimethylallyl group onto the adenine at position 37 in tRNAs that read codons beginning with uridine, leading to the formation of N6-(dimethylallyl)adenosine (i(6)A). This chain is tRNA dimethylallyltransferase, found in Azoarcus sp. (strain BH72).